The chain runs to 27 residues: Protamine-A (27 aa).

The segment at 1–27 (ARRRRRHASTKLKRRRRRRRHGKKSHK) is disordered.

As to expression, testis.

It localises to the nucleus. Its subcellular location is the chromosome. Protamines substitute for histones in the chromatin of sperm during the haploid phase of spermatogenesis. They compact sperm DNA into a highly condensed, stable and inactive complex. This chain is Protamine-A, found in Acipenser stellatus (Sevruga).